The primary structure comprises 303 residues: Olfactory receptor 10A2 (303 aa).

At 1–12 (MSFSSLPTEIQS) the chain is on the extracellular side. The chain crosses the membrane as a helical span at residues 13-33 (LLFLTFLTIYLVTLMGNCLII). At 34 to 41 (LVTLADPM) the chain is on the cytoplasmic side. The helical transmembrane segment at 42–62 (LHSPMYFFLRNLSFLEIGFNL) threads the bilayer. Topologically, residues 63–86 (VIVPKMLGTLLAQDTTISFLGCAT) are extracellular. Cys84 and Cys176 are oxidised to a cystine. Residues 87 to 107 (QMYFFFFFGVAECFLLATMAY) form a helical membrane-spanning segment. Topologically, residues 108–126 (DRYVAICSPLHYPVIMNQR) are cytoplasmic. A helical transmembrane segment spans residues 127–147 (TRAKLAAASWFPGFPVATVQT). The Extracellular segment spans residues 148 to 184 (TWLFSFPFCGTNKVNHFFCDSPPVLRLVCADTALFEI). Residues 185–204 (YAIVGTILVVMIPCLLILCS) form a helical membrane-spanning segment. Over 205-224 (YTHIAAAILKIPSAKGKNKA) the chain is Cytoplasmic. The chain crosses the membrane as a helical span at residues 225–245 (FSTCSSHLLVVSLFYISLSLT). Over 246–258 (YFRPKSNNSPEGK) the chain is Extracellular. Residues 259–279 (KLLSLSYTVMTPMLNPIIYSL) traverse the membrane as a helical segment. The Cytoplasmic portion of the chain corresponds to 280-301 (RNNEVKNALSRTVSKALALRNC).

It belongs to the G-protein coupled receptor 1 family.

The protein localises to the cell membrane. In terms of biological role, odorant receptor. This Homo sapiens (Human) protein is Olfactory receptor 10A2 (OR10A2).